The chain runs to 497 residues: Ankyrin repeat domain-containing protein 53 (497 aa).

The span at methionine 1–lysine 10 shows a compositional bias: basic residues. A disordered region spans residues methionine 1–glutamine 65. Residues serine 12 to serine 27 show a composition bias toward low complexity. Residues aspartate 28–proline 39 are compositionally biased toward basic and acidic residues. ANK repeat units lie at residues lysine 110–leucine 140, lysine 144–serine 177, and asparagine 181–alanine 210. Residues tryptophan 239 to glutamate 264 are a coiled coil.

As to quaternary structure, interacts with PSRC1; recruited by PSRC1 to the spindle during mitosis. In terms of processing, phosphorylated during mitosis.

It is found in the cytoplasm. The protein localises to the cytoskeleton. The protein resides in the spindle. It localises to the spindle pole. Required for normal progression through mitosis. Involved in chromosome alignment and cytokinesis via regulation of microtubules polymerization. This chain is Ankyrin repeat domain-containing protein 53 (Ankrd53), found in Mus musculus (Mouse).